Consider the following 117-residue polypeptide: Protein GL2-INTERACTING REPRESSOR 2 (117 aa).

Residues 1–56 (MSRRNKNGPKLELRLNLSPPPSQASQMSLVRSPNRSNTTSPSSCVSSETNQEENET) form a disordered region. The EAR motif lies at 10–15 (KLELRL). Over residues 31–49 (RSPNRSNTTSPSSCVSSET) the composition is skewed to low complexity.

As to quaternary structure, interacts with GL2. Interacts with TPL.

The protein localises to the nucleus. Functionally, acts as a negative regulator of root hair development redundantly with GIR1. GIR1 and GIR2 may function as adapter proteins that associate with GL2 and participate in the control of root hair formation. GIR1 and GIR2 may function as adapter proteins that associate with TPL and participate in the repression of root gene expression. The protein is Protein GL2-INTERACTING REPRESSOR 2 of Arabidopsis thaliana (Mouse-ear cress).